The following is a 901-amino-acid chain: Disease resistance RPP8-like protein 3 (901 aa).

A coiled-coil region spans residues 15–56 (ALLNRESERLNGIDEQVDGLKRQLRGLQSLLKDADAKKHGSD). The 310-residue stretch at 144-453 (LQDIQREIRQ…AEGIYDGLTI (310 aa)) folds into the NB-ARC domain. ATP-binding positions include 190–197 (GMGGIGKT) and 385–392 (GAQIVGKS). 3 LRR repeats span residues 567–591 (LPLLRVLDLSSVKFEGGKLPSSIGG), 592–615 (LIHLRFLSLHQAVVSHLPSTIRNL), and 833–858 (MPCLRDLIIHSCEKLEELPDGLKYVT).

Belongs to the disease resistance NB-LRR family. RPP8/HRT subfamily.

In terms of biological role, disease resistance protein. This chain is Disease resistance RPP8-like protein 3 (RPP8L3), found in Arabidopsis thaliana (Mouse-ear cress).